The chain runs to 965 residues: Serine/threonine-protein kinase tousled-like 1 (965 aa).

6 disordered regions span residues 1–22 (MSML…GGER), 35–72 (PQNK…ATGD), 95–120 (QNSS…TRSS), 172–292 (NHQQ…KQER), 320–402 (QNQG…QSGR), and 538–576 (RKPL…DDAI). Gly residues predominate over residues 10-21 (VAGGGSSSGGGE). The span at 42 to 52 (TVQSSGSSSNH) shows a compositional bias: polar residues. Residues 172-231 (NHQQQMQQMHYHQQQQQYQQQQAQHHQMYAPQIQQQQQQPQQQSQQQSAQQPQQSSAALQ) are compositionally biased toward low complexity. Composition is skewed to polar residues over residues 233–244 (VNESSNLSSAGS) and 320–341 (QNQG…SYDS). The segment covering 342-355 (QQQQPQMNQHEMQN) has biased composition (low complexity). The segment covering 365–381 (LGVNNRGTPTPTQQQHY) has biased composition (polar residues). The segment covering 382–401 (SSDSNSNSNQSPPGQGNQSG) has biased composition (low complexity). Residues 552–572 (AVNSQNDSNGMQPSTSSNTNG) are compositionally biased toward polar residues. A Phosphoserine modification is found at S634. The Protein kinase domain maps to 651-928 (YLMLNLLGKG…VFELAKHELF (278 aa)). Residues 657 to 665 (LGKGGFSEV) and K680 each bind ATP. The Proton acceptor role is filled by D781.

This sequence belongs to the protein kinase superfamily. Ser/Thr protein kinase family. In terms of assembly, interacts with air-2. Autophosphorylates in vitro. Phosphorylation on Ser-634 by air-2 enhances catalytic activity.

It localises to the nucleus. The catalysed reaction is L-seryl-[protein] + ATP = O-phospho-L-seryl-[protein] + ADP + H(+). It catalyses the reaction L-threonyl-[protein] + ATP = O-phospho-L-threonyl-[protein] + ADP + H(+). Its function is as follows. Essential for appropriate transcription during embryonic development. May act during transcription elongation to activate the RNA polymerase II large subunit (ama-1) by phosphorylating the Ser-2 residues of the C-terminal domain 7-residue repeats. Does not phosphorylate histone H3. In Caenorhabditis elegans, this protein is Serine/threonine-protein kinase tousled-like 1 (tlk-1).